The primary structure comprises 559 residues: Urocanate hydratase (559 aa).

NAD(+) contacts are provided by residues 53-54 (GG), Gln-131, 177-179 (GMG), Glu-197, Arg-202, 243-244 (NA), 264-268 (QTSAH), 274-275 (YL), and Tyr-323. The active site involves Cys-411. Gly-493 contacts NAD(+).

The protein belongs to the urocanase family. NAD(+) serves as cofactor.

The protein localises to the cytoplasm. The enzyme catalyses 4-imidazolone-5-propanoate = trans-urocanate + H2O. It participates in amino-acid degradation; L-histidine degradation into L-glutamate; N-formimidoyl-L-glutamate from L-histidine: step 2/3. Its function is as follows. Catalyzes the conversion of urocanate to 4-imidazolone-5-propionate. The chain is Urocanate hydratase from Pseudomonas aeruginosa (strain LESB58).